The following is a 469-amino-acid chain: D-3-phosphoglycerate dehydrogenase 2 (469 aa).

The residue at position 2 (Ser2) is an N-acetylserine. A phosphoserine mark is found at Ser22, Ser29, and Ser33. NAD(+) is bound by residues 208-209, Asp228, 285-287, and Asp311; these read HI and ASR. Residue Arg287 is part of the active site. Glu316 is an active-site residue. His347 acts as the Proton donor in catalysis. 347–350 serves as a coordination point for NAD(+); the sequence is HIGG. The ACT domain occupies 399 to 469; that stretch reads RVLYIHRNVP…SAKVSIRLLY (71 aa).

It belongs to the D-isomer specific 2-hydroxyacid dehydrogenase family.

The catalysed reaction is (2R)-3-phosphoglycerate + NAD(+) = 3-phosphooxypyruvate + NADH + H(+). The enzyme catalyses (R)-2-hydroxyglutarate + NAD(+) = 2-oxoglutarate + NADH + H(+). The protein operates within amino-acid biosynthesis; L-serine biosynthesis; L-serine from 3-phospho-D-glycerate: step 1/3. Catalyzes the reversible oxidation of 3-phospho-D-glycerate to 3-phosphonooxypyruvate, the first step of the phosphorylated L-serine biosynthesis pathway. Also catalyzes the reversible oxidation of 2-hydroxyglutarate to 2-oxoglutarate. This chain is D-3-phosphoglycerate dehydrogenase 2 (SER33), found in Saccharomyces cerevisiae (strain ATCC 204508 / S288c) (Baker's yeast).